Consider the following 718-residue polypeptide: LON peptidase N-terminal domain and RING finger protein 3 (718 aa).

Residues 1-69 are disordered; the sequence is MESLRTEQML…PGTSTPESKV (69 aa). Residues 57–66 are compositionally biased toward polar residues; that stretch reads EQSPGTSTPE. One copy of the TPR 1 repeat lies at 67–100; sequence SKVLLTQADALASRGRIREALEVYRQLSERQQLV. The RING-type 1 zinc-finger motif lies at 158–196; that stretch reads CRKCHGFLSDPVSLSCGHTFCKLCLERGRAADRRCALCG. TPR repeat units lie at residues 243-276 and 278-310; these read ASQL…APND and LLYS…RPMG. The disordered stretch occupies residues 322–413; that stretch reads SQEEAAARGD…TDQGDKPALS (92 aa). The span at 339–352 shows a compositional bias: basic and acidic residues; that stretch reads AKVKGDGQQHHMKD. The segment at 426–464 adopts an RING-type 2 zinc-finger fold; the sequence is CALCMRLFYEPVTTPCGHTFCLKCLERCLDHNAKCPLCK. The Lon N-terminal domain maps to 505 to 714; sequence MEELSNLNKN…GIRRVLAFIS (210 aa).

This chain is LON peptidase N-terminal domain and RING finger protein 3 (LONRF3), found in Macaca fascicularis (Crab-eating macaque).